Here is a 299-residue protein sequence, read N- to C-terminus: ATP phosphoribosyltransferase (299 aa).

This sequence belongs to the ATP phosphoribosyltransferase family. Long subfamily. As to quaternary structure, equilibrium between an active dimeric form, an inactive hexameric form and higher aggregates. Interconversion between the various forms is largely reversible and is influenced by the natural substrates and inhibitors of the enzyme. Mg(2+) is required as a cofactor.

The protein localises to the cytoplasm. It carries out the reaction 1-(5-phospho-beta-D-ribosyl)-ATP + diphosphate = 5-phospho-alpha-D-ribose 1-diphosphate + ATP. Its pathway is amino-acid biosynthesis; L-histidine biosynthesis; L-histidine from 5-phospho-alpha-D-ribose 1-diphosphate: step 1/9. Feedback inhibited by histidine. Its function is as follows. Catalyzes the condensation of ATP and 5-phosphoribose 1-diphosphate to form N'-(5'-phosphoribosyl)-ATP (PR-ATP). Has a crucial role in the pathway because the rate of histidine biosynthesis seems to be controlled primarily by regulation of HisG enzymatic activity. This chain is ATP phosphoribosyltransferase (hisG), found in Buchnera aphidicola subsp. Schizaphis graminum (strain Sg).